The sequence spans 125 residues: 13 kDa ribonucleoprotein-associated protein (125 aa).

The protein belongs to the eukaryotic ribosomal protein eL8 family. In terms of assembly, component of the U3 snoRNP particle. Binds to the C'/D and B/C motifs in U3 snoRNA. Component of the 25S U4/U6.U5 tri-snRNP particle, a subcomplex of the spliceosome. Binds to the 5' stem-loop of U4 snRNA.

The protein localises to the nucleus. It is found in the nucleolus. Functionally, common component of the spliceosome and rRNA processing machinery. In association with the spliceosomal U4/U6.U5 tri-snRNP particle, required for splicing of pre-mRNA. In association with box C/D snoRNPs, required for processing of pre-ribosomal RNA (rRNA) and site-specific 2'-O-methylation of substrate RNAs. Essential for the accumulation and stability of U4 snRNA, U6 snRNA, and box C/D snoRNAs. The polypeptide is 13 kDa ribonucleoprotein-associated protein (snu13) (Schizosaccharomyces pombe (strain 972 / ATCC 24843) (Fission yeast)).